Here is a 340-residue protein sequence, read N- to C-terminus: MTFPNVKFIGNKRVLSIQSSVSHGYVGNRSATFPLQLHEWEVDVVPTVHFSNHLGYGATRGSACIPEEVHDLLNALLQDNGIVYDAILTGFVPNHDIIQVIFDCVLAYKKDHPKVLWLLDPVMGDQGKMYVDTNVISTYKAMIPHAFAITPNAFEVEILTDIVIHTQMDAKRGLEKIYQLYGIQNAIITSFEVEESPGTLFCMGYSCEHGKPQLFLYQFPSLSGVFTGTGDLFSGLLLAKYREELDKRKHQQSDETKQTKRPTVLACAVGQVLSCMHTVLVNTKTYADEILLEDPKIASDEFLLSNARELRLIQSRTALLSKKSIYEAEFLPGFEEGEDV.

2 residues coordinate substrate: Ser19 and Tyr130. ATP contacts are provided by residues 189–190 and 218–230; these read TS and QFPS…TGTG. Residue Asp231 participates in substrate binding.

This sequence belongs to the pyridoxine kinase family. Requires a divalent metal cation as cofactor.

The protein resides in the cytoplasm. It localises to the nucleus. The catalysed reaction is pyridoxal + ATP = pyridoxal 5'-phosphate + ADP + H(+). In terms of biological role, required for synthesis of pyridoxal-5-phosphate from vitamin B6. The protein is Putative pyridoxal kinase C18.10 of Schizosaccharomyces pombe (strain 972 / ATCC 24843) (Fission yeast).